The following is a 253-amino-acid chain: Ribosomal RNA small subunit methyltransferase J (253 aa).

S-adenosyl-L-methionine-binding positions include 98–99 (RD), 114–115 (ER), 150–151 (SS), and Asp172.

It belongs to the methyltransferase superfamily. RsmJ family.

The protein resides in the cytoplasm. It catalyses the reaction guanosine(1516) in 16S rRNA + S-adenosyl-L-methionine = N(2)-methylguanosine(1516) in 16S rRNA + S-adenosyl-L-homocysteine + H(+). In terms of biological role, specifically methylates the guanosine in position 1516 of 16S rRNA. The protein is Ribosomal RNA small subunit methyltransferase J of Shewanella pealeana (strain ATCC 700345 / ANG-SQ1).